A 557-amino-acid polypeptide reads, in one-letter code: TWiK family of potassium channels protein 7 (557 aa).

2 disordered regions span residues 1-34 (MTSSSRGYQRVDSSGDGGSLLMEEEGDNPHEALL) and 128-151 (DKSGHEDIDDESDDESKDEDEEEE). Topologically, residues 1–165 (MTSSSRGYQR…RKFAKLVLPH (165 aa)) are cytoplasmic. Over residues 134 to 151 (DIDDESDDESKDEDEEEE) the composition is skewed to acidic residues. A helical membrane pass occupies residues 166-186 (VALVLLTCTYTVIGALIFYSV). N-linked (GlcNAc...) asparagine glycans are attached at residues N220 and N237. An intramembrane region (pore-forming) is located at residues 270–290 (SIFFAVTVVTTIGYGNPVPVT). A helical membrane pass occupies residues 295-315 (IWCILFSLLGIPLTLVTIADL). Residues 316–368 (GKFLSEHLVWLYGNYLKLKYLILSRHRKERREHVCEHCHSHGMGHDMNIEEKR) lie on the Cytoplasmic side of the membrane. Residues 369–389 (IPAFLVLAILIVYTAFGGVLM) traverse the membrane as a helical segment. The segment at residues 397–417 (FFTSFYWSFITMTTVGFGDLM) is an intramembrane region (pore-forming). A helical transmembrane segment spans residues 426–446 (IILLYIILGLAITTMCIDLVG). Residues 447–557 (VQYIRKIHYF…SRYSLNRAFK (111 aa)) are Cytoplasmic-facing.

This sequence belongs to the two pore domain potassium channel (TC 1.A.1.8) family.

The protein localises to the membrane. The polypeptide is TWiK family of potassium channels protein 7 (twk-7) (Caenorhabditis elegans).